Here is a 690-residue protein sequence, read N- to C-terminus: Glycine--tRNA ligase 1, mitochondrial (690 aa).

The N-terminal 24 residues, 1 to 24, are a transit peptide targeting the mitochondrion; the sequence is MSFFNISRRFYSQIVKKSVKIKRM. Residue S25 is modified to N-acetylserine. Position 226 is a phosphoserine (S226). Residue E251 coordinates glycine. ATP-binding positions include 283-285 and 294-295; these read RNE and RV. E302 contributes to the glycine binding site. Residue 410–411 participates in ATP binding; the sequence is EC. A phosphoserine mark is found at S476 and S528. Residue 531-533 participates in glycine binding; the sequence is EPS. ATP is bound at residue R538. T689 is subject to Phosphothreonine.

The protein belongs to the class-II aminoacyl-tRNA synthetase family. In terms of assembly, homodimer.

It localises to the cytoplasm. It is found in the mitochondrion matrix. The catalysed reaction is tRNA(Gly) + glycine + ATP = glycyl-tRNA(Gly) + AMP + diphosphate. It catalyses the reaction 2 ATP + H(+) = P(1),P(4)-bis(5'-adenosyl) tetraphosphate + diphosphate. Its function is as follows. Catalyzes the ATP-dependent ligation of glycine to the 3'-end of its cognate tRNA, via the formation of an aminoacyl-adenylate intermediate (Gly-AMP). Also produces diadenosine tetraphosphate (Ap4A), a universal pleiotropic signaling molecule needed for cell regulation pathways, by direct condensation of 2 ATPs. Thereby, may play a special role in Ap4A homeostasis. In Saccharomyces cerevisiae (strain ATCC 204508 / S288c) (Baker's yeast), this protein is Glycine--tRNA ligase 1, mitochondrial (GRS1).